A 364-amino-acid chain; its full sequence is Melatonin receptor type 1B (364 aa).

A signal peptide spans 1–28; that stretch reads MPDNSSIANCCAASGLAARPSWPGSAEA. Over 29–45 the chain is Extracellular; it reads EPPETPRAPWVAPMLST. A helical membrane pass occupies residues 46–66; that stretch reads VVIVTTAVDFVGNLLVILSVL. Residues 67 to 81 lie on the Cytoplasmic side of the membrane; that stretch reads RNRKLRNAGNLFVVN. A helical membrane pass occupies residues 82 to 102; sequence LALADLVVALYPYPLILVAIL. Residues 103-115 are Extracellular-facing; that stretch reads HDGWVLGEIHCKA. Cys113 and Cys190 form a disulfide bridge. Residues 116 to 136 form a helical membrane-spanning segment; that stretch reads SAFVMGLSVIGSVFNITAIAI. The Cytoplasmic segment spans residues 137–158; it reads NRYWCICHSATYHRACSQWHAP. A helical transmembrane segment spans residues 159-179; that stretch reads LYISLIWLLTLVALVPNFFVG. Over 180-200 the chain is Extracellular; the sequence is SLEYDPRIYSCTFIQTASTQY. Residues 201–221 form a helical membrane-spanning segment; the sequence is TMAVVAIHFLLPIAVVSFCYL. Topologically, residues 222–255 are cytoplasmic; the sequence is RIWILVLQARRKAKAERKLRLRPSDLRSFLTMFA. The chain crosses the membrane as a helical span at residues 256-276; the sequence is VFVVFAICWAPLNCIGLAVAI. Residues 277–287 lie on the Extracellular side of the membrane; sequence NPEAMALQIPE. The chain crosses the membrane as a helical span at residues 288–308; that stretch reads GLFVTSYFLAYFNSCLNAIVY. Residues 309 to 364 are Cytoplasmic-facing; that stretch reads GLLNQNFRREYKRILSALWSTGRCFHDASKCHLTEDLQGPVPPAAMATIPVQEGAL.

It belongs to the G-protein coupled receptor 1 family. As to expression, expressed in the hippocampus, kidney, and ovary.

The protein localises to the cell membrane. Its function is as follows. High affinity receptor for melatonin. The activity of this receptor is mediated by pertussis toxin sensitive G proteins that inhibits adenylate cyclase activity. This is Melatonin receptor type 1B from Rattus norvegicus (Rat).